A 357-amino-acid polypeptide reads, in one-letter code: 3-isopropylmalate dehydrogenase (357 aa).

76–89 is a binding site for NAD(+); that stretch reads GPKWDALDSNIRPE. 4 residues coordinate substrate: Arg-96, Arg-106, Arg-134, and Asp-224. Residues Asp-224, Asp-248, and Asp-252 each contribute to the Mg(2+) site. Position 282-294 (282-294) interacts with NAD(+); that stretch reads GSAPDIAGQGVAN.

This sequence belongs to the isocitrate and isopropylmalate dehydrogenases family. LeuB type 1 subfamily. As to quaternary structure, homodimer. It depends on Mg(2+) as a cofactor. Requires Mn(2+) as cofactor.

Its subcellular location is the cytoplasm. The catalysed reaction is (2R,3S)-3-isopropylmalate + NAD(+) = 4-methyl-2-oxopentanoate + CO2 + NADH. The protein operates within amino-acid biosynthesis; L-leucine biosynthesis; L-leucine from 3-methyl-2-oxobutanoate: step 3/4. Its function is as follows. Catalyzes the oxidation of 3-carboxy-2-hydroxy-4-methylpentanoate (3-isopropylmalate) to 3-carboxy-4-methyl-2-oxopentanoate. The product decarboxylates to 4-methyl-2 oxopentanoate. The sequence is that of 3-isopropylmalate dehydrogenase from Saccharophagus degradans (strain 2-40 / ATCC 43961 / DSM 17024).